Consider the following 122-residue polypeptide: Large ribosomal subunit protein uL14 (122 aa).

The protein belongs to the universal ribosomal protein uL14 family. In terms of assembly, part of the 50S ribosomal subunit. Forms a cluster with proteins L3 and L19. In the 70S ribosome, L14 and L19 interact and together make contacts with the 16S rRNA in bridges B5 and B8.

In terms of biological role, binds to 23S rRNA. Forms part of two intersubunit bridges in the 70S ribosome. This Prosthecochloris aestuarii (strain DSM 271 / SK 413) protein is Large ribosomal subunit protein uL14.